The sequence spans 1338 residues: MDLEPWGPLYRKQDQDGSLDNIAVVSGDIPSPHPKNEPSQTSTLHIPRDSDLDSDIPSVPTALIIAWGLTLSSLTGDEVVGFDLLPFRGDYQDLGARPYHFLLKFGYREWSREAATTGMDLGSASSEGLPQGMGNRPQIAPSRFRNVLIIKQCSDAPGDSGSLESPSLGNVDKDEPTDAFRADMFISIQCGIGRTGIDVHCSFDPAFWTSENIRMILLDLSRNFKEVMRCGRDDTPLTCLEGMSPKGLDCVLRRNIIPPPPKMEACVHHRFQARCRQNPSALAIDAWDGQLTYAELDSLSSQLASRLVSSITICPRGFMGVLMEKSAWVPVAILAVLKVGSAFVFLDGSQPLQRLKIICAETKSQLVLSSAHYREKANTLGPPVLLVEKNQSGLGQAKENDSCPSLLEDYPQPQSQPQDTLYAVFTSGSTGEPKGAMVDHGAFCTMCGPQMAARPTTNVSPRVFQFAPHAFTVSILDYLGTLLQGGCVCVPSEEELRNNMAGAIEGLSANIVTMTPSMARVLDPTQTPSLQLVLLAGEMMAQCDLDKWSQCVRLLSLYGQSENAAGSMISEKSIVPRAPNTFETLTPGFQCWIVSQDNPHRLMALGEVGELLLEGPALGQGYMNDPIQTEDKFICRSFCLEYAHSGSPQSYRLFKTGDLVRYTPAGEIELLGRKGAEVKLRGQRIDLTEIEHHLRCLFPSATRVVADVIIPSDDIDGLHPVLAAFVQVDSVSRTGQSAEATFASPRPEFRAEAKAVLSGLCQTIPSYMIPMTIIPTEAFPFTATGKLDRRSLRQYASAMSRSDLLKYVTDDRGPVVTAVTPVEIIIHDACVEALGVSSDKVGMLDSFPDLGGDSLAARRMVSICRTKGLELAVADILAHSSLTSLAEKCSAGGGGAKQISQGVEMLDPFSTAKEEFLSHLPSFLPNADMIADVFPVQGAQRRAARAIDTFIFRLSGPVDADRLRDACQVLQQAHLALRSIFVPFYGKFMQVVLRVPPLDFTRRLLPDGTDLVKWAESIGQADKTQRPPSEEFVVRFTLAETAGTPDYSIFMMRLSHAQYDAGCLARIISDLWAVYEQKQLVVKSDFAQYARRAVQQTHLLSMEAFWRDLLAGTTGLTPLPVTGISAEEERTIIVQQRVELKEPPPTGISMATVVRGAWSWVLHQQTGNTVVVFNEMLNGRDVVPLEDTEPVVGACHSIVPVCVHFPLPQSGRTPRELLSALQEQHLASLTFTTLDRDYLIQNCTEWTSHQSGFILAYQNFPEICDLVIGEDLSCQWASQVLDLAEPGEAWVTATPLPGALQISLRVSTAAMDEQEANAWISALGQTIIRFLDSPDSVL.

Residues 22-52 form a disordered region; the sequence is IAVVSGDIPSPHPKNEPSQTSTLHIPRDSDL. Residues 271–681 are adenylation; that stretch reads FQARCRQNPS…GRKGAEVKLR (411 aa). In terms of domain architecture, Carrier spans 820-893; it reads TPVEIIIHDA…SLAEKCSAGG (74 aa). An O-(pantetheine 4'-phosphoryl)serine modification is found at S854. The tract at residues 949-1336 is condensation; that stretch reads TFIFRLSGPV…IIRFLDSPDS (388 aa).

It belongs to the NRP synthetase family.

It carries out the reaction 7beta,14,16-trihydroxyconfertifolin + benzoate + H(+) = dideacetyl astellolide A + H2O. The catalysed reaction is 7beta,14,16-trihydroxyconfertifolin + 4-hydroxybenzoate + H(+) = dideacetyl astellolide B + H2O. It functions in the pathway secondary metabolite biosynthesis; terpenoid biosynthesis. Nonribosomal peptide synthetase; part of the gene cluster that mediates the biosynthesis of astellolides, drimane-type sesquiterpene esters that show antimicrobial, anti-inflammatory, and anti-tumor activities. The first step in astellolide biosynthesis is performed by the sesquiterpene cyclase astC that catalyzes the formation of drimanyl pyrophosphate from farnesyl pyrophosphate. Drimanyl pyrophosphate is then dephosphorylated by the sesquiterpene phosphatase astI to produce drimanyl monophosphate which is further dephosphorylated to drim-8-ene-11-ol by atsK. Drim-8-ene-11-ol is converted to confertifolin, probably by the cytochrome P450 monooxygenase astD and/or the dehydrogenase astE. The cytochrome P450 monooxygenases astB, astF and astJ then hydroxylate confertifolin at C6, C14, or C15 to form trihydroxy confertifolin. The nonribosomal peptide synthetase astA catalyzes ester bond formation between trihydroxy contifolin and benzoic acid (BA) or 4-hydroxy benzoic acid (4HBA), leading to the formation of dideacetyl astellolides A and B, respectively. Finally, the O-acetyltransferase astG converts dideacetyl astellolides A and B into deacetyl astellolides A and B. This Aspergillus oryzae (strain ATCC 42149 / RIB 40) (Yellow koji mold) protein is Nonribosomal peptide synthetase astA.